A 463-amino-acid chain; its full sequence is Glucagon-like peptide 1 receptor (463 aa).

Positions 1–21 (MAVTPSLLRLALLLLGAVGRA) are cleaved as a signal peptide. Topologically, residues 22–139 (GPRPQGATVS…KQGERNSPEE (118 aa)) are extracellular. Cystine bridges form between Cys-46–Cys-71, Cys-62–Cys-104, and Cys-85–Cys-126. N-linked (GlcNAc...) asparagine glycans are attached at residues Asn-63, Asn-82, and Asn-115. A helical transmembrane segment spans residues 140–164 (QLLSLYIIYTVGYALSFSALVIASA). Residues 165-175 (ILVSFRHLHCT) are Cytoplasmic-facing. A helical membrane pass occupies residues 176 to 201 (RNYIHLNLFASFILRALSVFIKDAAL). Residues 202-227 (KWMYSTAAQQHQWDGLLSYQDSLGCR) are Extracellular-facing. An intrachain disulfide couples Cys-226 to Cys-296. A helical transmembrane segment spans residues 228–251 (LVFLLMQYCVAANYYWLLVEGVYL). At 252 to 265 (YTLLAFSVFSEQRI) the chain is on the cytoplasmic side. The chain crosses the membrane as a helical span at residues 266–290 (FKLYLSIGWGVPLLFVIPWGIVKYL). At 291-305 (YEDEGCWTRNSNMNY) the chain is on the extracellular side. The chain crosses the membrane as a helical span at residues 306-328 (WLIIRLPILFAIGVNFLVFIRVI). The Cytoplasmic segment spans residues 329-348 (CIVIAKLKANLMCKTDIKCR). Cys-341 bears the ADP-ribosylcysteine mark. Arg-348 bears the ADP-ribosylarginine mark. The chain crosses the membrane as a helical span at residues 349–370 (LAKSTLTLIPLLGTHEVIFAFV). An important for allosteric inhibitor binding region spans residues 352 to 355 (STLT). Residues 371–383 (MDEHARGTLRFVK) lie on the Extracellular side of the membrane. The helical transmembrane segment at 384–404 (LFTELSFTSFQGFMVAVLYCF) threads the bilayer. The Cytoplasmic segment spans residues 405 to 463 (VNNEVQMEFRKSWERWRLERLNIQRDSSMKPLKCPTSSVSSGATVGSSVYAATCQNSCS).

This sequence belongs to the G-protein coupled receptor 2 family. May form homodimers and heterodimers with GIPR. Post-translationally, N-glycosylation enhances cell surface expression and lengthens receptor half-life by preventing degradation in the ER. Pancreatic islets, stomach, lung, rat insulinoma cell line.

The protein resides in the cell membrane. Functionally, G-protein coupled receptor for glucagon-like peptide 1 (GLP-1). Ligand binding triggers activation of a signaling cascade that leads to the activation of adenylyl cyclase and increased intracellular cAMP levels. Plays a role in regulating insulin secretion in response to GLP-1. The protein is Glucagon-like peptide 1 receptor (Glp1r) of Rattus norvegicus (Rat).